The following is a 516-amino-acid chain: Putative fatty acyl-CoA reductase CG8306 (516 aa).

Transmembrane regions (helical) follow at residues 356–376 (WVFR…LDLV), 471–491 (ILLG…FKLI), and 496–516 (GIST…FGLL).

Belongs to the fatty acyl-CoA reductase family.

The protein resides in the membrane. The enzyme catalyses a long-chain fatty acyl-CoA + 2 NADPH + 2 H(+) = a long-chain primary fatty alcohol + 2 NADP(+) + CoA. Functionally, catalyzes the reduction of C16 or C18 fatty acyl-CoA to fatty alcohols. In Drosophila melanogaster (Fruit fly), this protein is Putative fatty acyl-CoA reductase CG8306.